Consider the following 49-residue polypeptide: Large ribosomal subunit protein bL33C (49 aa).

Positions 21–49 are disordered; the sequence is KNKRNNPDRVEFKKYCPRDKKSTLHRETK. Basic and acidic residues predominate over residues 25–49; sequence NNPDRVEFKKYCPRDKKSTLHRETK.

The protein belongs to the bacterial ribosomal protein bL33 family.

This is Large ribosomal subunit protein bL33C from Bacillus licheniformis (strain ATCC 14580 / DSM 13 / JCM 2505 / CCUG 7422 / NBRC 12200 / NCIMB 9375 / NCTC 10341 / NRRL NRS-1264 / Gibson 46).